Reading from the N-terminus, the 344-residue chain is Arginine N-succinyltransferase (344 aa).

Leucine 125 contributes to the succinyl-CoA binding site. Histidine 229 functions as the Proton donor in the catalytic mechanism.

Belongs to the arginine N-succinyltransferase family.

The catalysed reaction is succinyl-CoA + L-arginine = N(2)-succinyl-L-arginine + CoA + H(+). It participates in amino-acid degradation; L-arginine degradation via AST pathway; L-glutamate and succinate from L-arginine: step 1/5. Catalyzes the transfer of succinyl-CoA to arginine to produce N(2)-succinylarginine. In Salmonella typhi, this protein is Arginine N-succinyltransferase.